Here is a 495-residue protein sequence, read N- to C-terminus: Probable serine/threonine-protein kinase DDB_G0292354 (495 aa).

The 260-residue stretch at 16–275 (WTVVKKIGQG…PNYVFLQTLL (260 aa)) folds into the Protein kinase domain. Residues 22-30 (IGQGAFGEI) and K45 contribute to the ATP site. D136 serves as the catalytic Proton acceptor. The interval 293–469 (EVQTNSGASS…NGNGSNSQPI (177 aa)) is disordered. Low complexity-rich tracts occupy residues 295–333 (QTNS…NSSA) and 354–364 (NNSNNNNNNNN). Residues 385–395 (ESNSQIANSSE) are compositionally biased toward polar residues. Over residues 435–466 (SNNNNINNNNNNYNNNNNNNNNSHMNGNGSNS) the composition is skewed to low complexity.

It belongs to the protein kinase superfamily. CK1 Ser/Thr protein kinase family.

The polypeptide is Probable serine/threonine-protein kinase DDB_G0292354 (Dictyostelium discoideum (Social amoeba)).